The sequence spans 99 residues: Imizoquin biosynthesis cluster protein A (99 aa).

It participates in secondary metabolite biosynthesis. In terms of biological role, part of the gene cluster that mediates the biosynthesis of imizoquins A to D, tripeptide-derived alkaloids that serve a protective role against oxidative stress that are essential for normal germination. ImqB is a canonical three-module NRPS that assembles the tripeptide backbone of the imizoquins via condensation of Trp, Tyr, and Leu-derived precursors. N-methylation by imqF and phenol oxidation by imqC, followed by cyclization via the FAD-dependent oxidase imqH carry out the three-step transformation of L-tyrosine into tetrahydroisoquinoline. Importantly, this sequence requires the presence of a free amine in the tyrosine moiety, indicating that isoquinoline formation occurs prior to peptide bond formation. The imidazolidin-4-one ring of imizoquins could form following additional oxidation of the methyl-derived bridgehead carbon by imqH. Lastly, O-methylation by imqG and leucine hydroxylation by imqE complete biosynthesis of the imizoquins. This chain is Imizoquin biosynthesis cluster protein A, found in Aspergillus flavus (strain ATCC 200026 / FGSC A1120 / IAM 13836 / NRRL 3357 / JCM 12722 / SRRC 167).